A 166-amino-acid polypeptide reads, in one-letter code: Cofilin-2 (166 aa).

In terms of domain architecture, ADF-H spans 4–153 (GVTVNDEVIK…KDRSTLGEKL (150 aa)). Serine 24 is subject to Phosphoserine. The Nuclear localization signal signature appears at 30–34 (KKRKK).

Belongs to the actin-binding proteins ADF family. In terms of processing, the phosphorylation of Ser-24 may prevent recognition of the nuclear localization signal. Widely distributed in various tissues.

Its subcellular location is the nucleus matrix. The protein localises to the cytoplasm. The protein resides in the cytoskeleton. In terms of biological role, controls reversibly actin polymerization and depolymerization in a pH-sensitive manner. It has the ability to bind G- and F-actin in a 1:1 ratio of cofilin to actin. It is the major component of intranuclear and cytoplasmic actin rods. In Gallus gallus (Chicken), this protein is Cofilin-2 (CFL2).